A 74-amino-acid polypeptide reads, in one-letter code: Exodeoxyribonuclease 7 small subunit (74 aa).

The protein belongs to the XseB family. In terms of assembly, heterooligomer composed of large and small subunits.

The protein resides in the cytoplasm. It catalyses the reaction Exonucleolytic cleavage in either 5'- to 3'- or 3'- to 5'-direction to yield nucleoside 5'-phosphates.. In terms of biological role, bidirectionally degrades single-stranded DNA into large acid-insoluble oligonucleotides, which are then degraded further into small acid-soluble oligonucleotides. In Actinobacillus pleuropneumoniae serotype 5b (strain L20), this protein is Exodeoxyribonuclease 7 small subunit.